The chain runs to 167 residues: Large ribosomal subunit protein uL15 (167 aa).

Positions 1–10 (MKLNQISDNP) are enriched in polar residues. Positions 1–37 (MKLNQISDNPGATKDRMRVGRGIGSGKGKTAGRGVKG) are disordered. Positions 21 to 35 (RGIGSGKGKTAGRGV) are enriched in gly residues.

It belongs to the universal ribosomal protein uL15 family. As to quaternary structure, part of the 50S ribosomal subunit.

In terms of biological role, binds to the 23S rRNA. The chain is Large ribosomal subunit protein uL15 from Methylobacterium radiotolerans (strain ATCC 27329 / DSM 1819 / JCM 2831 / NBRC 15690 / NCIMB 10815 / 0-1).